Here is a 610-residue protein sequence, read N- to C-terminus: Oxidoreductase ptaE (610 aa).

The signal sequence occupies residues 1-20; it reads MFQSILFLAFYGRPVFGSAA. Plastocyanin-like domains follow at residues 67–181 and 191–344; these read QIIS…HGPS and PWLL…IVRY. N-linked (GlcNAc...) asparagine glycosylation is found at Asn105, Asn111, Asn262, Asn277, Asn330, Asn356, Asn401, Asn409, Asn427, and Asn602. Residues 425–568 form the Plastocyanin-like 3 domain; it reads YVNWSEPSVK…IAIQFLEQPS (144 aa).

The protein belongs to the multicopper oxidase family.

It functions in the pathway secondary metabolite biosynthesis. Its function is as follows. Oxidoreductase; part of the gene cluster that mediates the biosynthesis of pestheic acid, a diphenyl ether which is a biosynthetic precursor of the unique chloropupukeananes. The biosynthesis initiates from condensation of acetate and malonate units catalyzed by the non-reducing PKS ptaA. As the ptaA protein is TE/CLC domain-deficient, hydrolysis and Claisen cyclization of the polyketide could be catalyzed by ptaB containing a beta-lactamase domain. The ptaB protein might hydrolyze the thioester bond between the ACP of ptaA and the intermediate to release atrochrysone carboxylic acid, which is spontaneously dehydrated to form endocrocin anthrone. Endocrocin anthrone is then converted to endocrocin, catalyzed by the anthrone oxygenase ptaC. Spontaneous decarboxylation of endocrocin occurs to generate emodin. An O-methyltransferase (ptaH or ptaI) could methylate emodin to form physcion. PtaJ could then catalyze the oxidative cleavage of physcion, and rotation of the intermediate could then afford desmethylisosulochrin. PtaF, a putative NADH-dependent oxidoreductase, might also participate in the oxidative cleavage step. Desmethylisosulochrin is then transformed by another O-methyltransferase (ptaH or ptaI) to form isosulochrin. Chlorination of isosulochrin by ptaM in the cyclohexadienone B ring then produces chloroisosulochrin. PtaE is responsible for the oxidative coupling reactions of both benzophenones isosulouchrin and chloroisosulochrin to RES-1214-1 and pestheic acid respectively, regardless of chlorination. The chain is Oxidoreductase ptaE from Pestalotiopsis fici (strain W106-1 / CGMCC3.15140).